The chain runs to 208 residues: Thiamine-phosphate synthase (208 aa).

Residues 37–41 (QYREK) and Asn73 contribute to the 4-amino-2-methyl-5-(diphosphooxymethyl)pyrimidine site. Mg(2+) is bound by residues Asp74 and Asp93. Position 112 (Ser112) interacts with 4-amino-2-methyl-5-(diphosphooxymethyl)pyrimidine. Residue 139–141 (TIS) coordinates 2-[(2R,5Z)-2-carboxy-4-methylthiazol-5(2H)-ylidene]ethyl phosphate. Position 142 (Lys142) interacts with 4-amino-2-methyl-5-(diphosphooxymethyl)pyrimidine. Residues Gly171 and 191-192 (IS) each bind 2-[(2R,5Z)-2-carboxy-4-methylthiazol-5(2H)-ylidene]ethyl phosphate.

This sequence belongs to the thiamine-phosphate synthase family. It depends on Mg(2+) as a cofactor.

The enzyme catalyses 2-[(2R,5Z)-2-carboxy-4-methylthiazol-5(2H)-ylidene]ethyl phosphate + 4-amino-2-methyl-5-(diphosphooxymethyl)pyrimidine + 2 H(+) = thiamine phosphate + CO2 + diphosphate. It carries out the reaction 2-(2-carboxy-4-methylthiazol-5-yl)ethyl phosphate + 4-amino-2-methyl-5-(diphosphooxymethyl)pyrimidine + 2 H(+) = thiamine phosphate + CO2 + diphosphate. It catalyses the reaction 4-methyl-5-(2-phosphooxyethyl)-thiazole + 4-amino-2-methyl-5-(diphosphooxymethyl)pyrimidine + H(+) = thiamine phosphate + diphosphate. It functions in the pathway cofactor biosynthesis; thiamine diphosphate biosynthesis; thiamine phosphate from 4-amino-2-methyl-5-diphosphomethylpyrimidine and 4-methyl-5-(2-phosphoethyl)-thiazole: step 1/1. Functionally, condenses 4-methyl-5-(beta-hydroxyethyl)thiazole monophosphate (THZ-P) and 2-methyl-4-amino-5-hydroxymethyl pyrimidine pyrophosphate (HMP-PP) to form thiamine monophosphate (TMP). This chain is Thiamine-phosphate synthase, found in Listeria welshimeri serovar 6b (strain ATCC 35897 / DSM 20650 / CCUG 15529 / CIP 8149 / NCTC 11857 / SLCC 5334 / V8).